Consider the following 190-residue polypeptide: dCTP deaminase (190 aa).

113–118 (KSTYAR) is a binding site for dCTP. The active-site Proton donor/acceptor is Glu139. Residues Gln158, Tyr172, Lys181, and Gln182 each coordinate dCTP.

The protein belongs to the dCTP deaminase family. As to quaternary structure, homotrimer.

It catalyses the reaction dCTP + H2O + H(+) = dUTP + NH4(+). It functions in the pathway pyrimidine metabolism; dUMP biosynthesis; dUMP from dCTP (dUTP route): step 1/2. In terms of biological role, catalyzes the deamination of dCTP to dUTP. This chain is dCTP deaminase, found in Chlamydia muridarum (strain MoPn / Nigg).